The sequence spans 90 residues: Progonadoliberin-3 (90 aa).

The signal sequence occupies residues 1–23; the sequence is MEASSRVTVQVLLLALVVQVTLS. The residue at position 24 (Gln-24) is a Pyrrolidone carboxylic acid. Residue Gly-33 is modified to Glycine amide.

The protein belongs to the GnRH family.

It is found in the secreted. Functionally, stimulates the secretion of gonadotropins. This is Progonadoliberin-3 (gnrh3) from Sparus aurata (Gilthead sea bream).